A 723-amino-acid polypeptide reads, in one-letter code: BBSome complex assembly protein BBS10 (723 aa).

This sequence belongs to the TCP-1 chaperonin family. In terms of assembly, component of a complex composed at least of MKKS, BBS10, BBS12, TCP1, CCT2, CCT3, CCT4, CCT5 and CCT8.

It is found in the cell projection. It localises to the cilium. Its function is as follows. Probable molecular chaperone that assists the folding of proteins upon ATP hydrolysis. Plays a role in the assembly of BBSome, a complex involved in ciliogenesis regulating transports vesicles to the cilia. Involved in adipogenic differentiation. This chain is BBSome complex assembly protein BBS10 (BBS10), found in Homo sapiens (Human).